The sequence spans 99 residues: Sperm protein associated with the nucleus on the X chromosome N4 (99 aa).

The segment covering 1–10 has biased composition (polar residues); it reads MEEPTSSTNE. The disordered stretch occupies residues 1–99; it reads MEEPTSSTNE…AGSPQDGGQN (99 aa). Basic and acidic residues predominate over residues 11–22; the sequence is NKMKSPCESNKR. The span at 23 to 32 shows a compositional bias: basic residues; sequence KVDKKKKNLH. Residues 64-78 show a composition bias toward polar residues; sequence SNQLENNQPTESSTD.

It belongs to the SPAN-X family.

In Homo sapiens (Human), this protein is Sperm protein associated with the nucleus on the X chromosome N4 (SPANXN4).